A 126-amino-acid chain; its full sequence is Large ribosomal subunit protein bL20 (126 aa).

The segment covering 1 to 15 (MARVKRAVNAQKKRR) has biased composition (basic residues). The disordered stretch occupies residues 1–20 (MARVKRAVNAQKKRRTTLER).

It belongs to the bacterial ribosomal protein bL20 family.

Functionally, binds directly to 23S ribosomal RNA and is necessary for the in vitro assembly process of the 50S ribosomal subunit. It is not involved in the protein synthesizing functions of that subunit. The chain is Large ribosomal subunit protein bL20 from Beutenbergia cavernae (strain ATCC BAA-8 / DSM 12333 / CCUG 43141 / JCM 11478 / NBRC 16432 / NCIMB 13614 / HKI 0122).